The following is a 289-amino-acid chain: Oxaloacetate decarboxylase (289 aa).

A substrate-binding site is contributed by Ser47. Asp85 contributes to the Mg(2+) binding site. Substrate-binding residues include Arg156 and His232.

The protein belongs to the isocitrate lyase/PEP mutase superfamily. Oxaloacetate decarboxylase family. As to quaternary structure, homotetramer; dimer of dimers. It depends on Mg(2+) as a cofactor.

It catalyses the reaction oxaloacetate + H(+) = pyruvate + CO2. Its function is as follows. Catalyzes the decarboxylation of oxaloacetate into pyruvate. Seems to play a role in maintaining cellular concentrations of bicarbonate and pyruvate. This is Oxaloacetate decarboxylase from Rhodopseudomonas palustris (strain BisB5).